Consider the following 556-residue polypeptide: Dihydroxy-acid dehydratase (556 aa).

Cys47 lines the [2Fe-2S] cluster pocket. Residue Asp79 participates in Mg(2+) binding. Cys120 is a binding site for [2Fe-2S] cluster. Mg(2+) is bound by residues Asp121 and Lys122. Lys122 carries the N6-carboxylysine modification. Cys192 contacts [2Fe-2S] cluster. Glu444 is a binding site for Mg(2+). The active-site Proton acceptor is the Ser470.

The protein belongs to the IlvD/Edd family. As to quaternary structure, homodimer. It depends on [2Fe-2S] cluster as a cofactor. Mg(2+) is required as a cofactor.

The enzyme catalyses (2R)-2,3-dihydroxy-3-methylbutanoate = 3-methyl-2-oxobutanoate + H2O. It carries out the reaction (2R,3R)-2,3-dihydroxy-3-methylpentanoate = (S)-3-methyl-2-oxopentanoate + H2O. Its pathway is amino-acid biosynthesis; L-isoleucine biosynthesis; L-isoleucine from 2-oxobutanoate: step 3/4. It participates in amino-acid biosynthesis; L-valine biosynthesis; L-valine from pyruvate: step 3/4. Its function is as follows. Functions in the biosynthesis of branched-chain amino acids. Catalyzes the dehydration of (2R,3R)-2,3-dihydroxy-3-methylpentanoate (2,3-dihydroxy-3-methylvalerate) into 2-oxo-3-methylpentanoate (2-oxo-3-methylvalerate) and of (2R)-2,3-dihydroxy-3-methylbutanoate (2,3-dihydroxyisovalerate) into 2-oxo-3-methylbutanoate (2-oxoisovalerate), the penultimate precursor to L-isoleucine and L-valine, respectively. This chain is Dihydroxy-acid dehydratase, found in Prochlorococcus marinus (strain MIT 9211).